A 180-amino-acid chain; its full sequence is Large ribosomal subunit protein uL5c (180 aa).

It belongs to the universal ribosomal protein uL5 family. As to quaternary structure, part of the 50S ribosomal subunit; contacts the 5S rRNA.

Its subcellular location is the plastid. The protein resides in the chloroplast. Its function is as follows. Binds 5S rRNA, forms part of the central protuberance of the 50S subunit. This is Large ribosomal subunit protein uL5c (rpl5) from Tupiella akineta (Green alga).